The sequence spans 247 residues: LHFPL tetraspan subfamily member 4 protein (247 aa).

The next 4 helical transmembrane spans lie at 22–42, 97–117, 127–147, and 178–198; these read IGVLWAIFTICFAIINVVVFI, FFVLLSMVLILGCITCFSLFF, ICAWMQLLAALCLVLGCMIFP, and ILAIIGILNALILSFLAFVLG.

Belongs to the LHFP family. Interacts with GABA(A) receptor subunits. Identified in a complex of 720 kDa composed of LHFPL4, NLGN2, GABRA1, GABRB2, GABRG2 and GABRB3. Interacts with GABRB3. Interacts with GABRA2. Interacts with GABRG2. Interacts with GABRA1. Interacts with NLGN2; leading to mutual regulation of protein level and synaptic clustering.

The protein localises to the cell projection. Its subcellular location is the dendrite. It is found in the postsynaptic cell membrane. In terms of biological role, plays a role in the regulation of inhibitory synapse formation and function by being involved in maintening gamma-aminobutyric acid receptors (GABAARs) clustering and their associated scaffold proteins at inhibitory synaptic sites. Acts in concert with NLGN2 to recruit or stabilize GABAARs. This is LHFPL tetraspan subfamily member 4 protein from Homo sapiens (Human).